We begin with the raw amino-acid sequence, 286 residues long: Single myb histone 5 (286 aa).

Positions 1-61 (MGAPKQRWTS…KWRNMNVIVT (61 aa)) constitute an HTH myb-type domain. Positions 28 to 57 (WRMILNDPELSSTLRYRSNVDLKDKWRNMN) form a DNA-binding region, H-T-H motif. The 69-residue stretch at 122 to 190 (SHSRLDNIIM…KVNRKYRIAP (69 aa)) folds into the H15 domain. Residues 229–277 (EAAAAAAAHAVAEAEAIMAEAEAAAREAEAAEAEARAAQAFAEAAVLTL) adopt a coiled-coil conformation.

It belongs to the histone H1/H5 family. SMH subfamily. In terms of assembly, forms a homodimer and heterodimers.

It is found in the nucleus. The protein resides in the chromosome. Its subcellular location is the nucleolus. The protein localises to the telomere. Its function is as follows. Binds preferentially double-stranded telomeric repeats, but may also bind to the single telomeric strand. The sequence is that of Single myb histone 5 (SMH5) from Zea mays (Maize).